The following is a 167-amino-acid chain: Probable membrane-bound hydrogenase subunit mbhJ (167 aa).

[4Fe-4S] cluster contacts are provided by Cys35, Cys38, Cys102, and Cys132.

The protein belongs to the complex I 20 kDa subunit family. As to quaternary structure, the membrane-bound hydrogenase complex is composed of MbhK and MbhL, but may also contain MbhJ. Requires [4Fe-4S] cluster as cofactor.

It is found in the cell membrane. The catalysed reaction is H2 + 2 oxidized [2Fe-2S]-[ferredoxin] = 2 reduced [2Fe-2S]-[ferredoxin] + 2 H(+). Its activity is regulated as follows. Inhibited by 0.1 mM Cu(2+). Functionally, probable subunit of a hydrogen-evolving hydrogenase that utilizes protons both as a substrate for hydrogen production and proton translocation. Acts by coupling the redox reaction via ferredoxin and iron-sulfur (Fe-S) clusters to proton translocation across the membrane, thereby conserving the redox energy in a proton gradient. This is Probable membrane-bound hydrogenase subunit mbhJ from Pyrococcus furiosus (strain ATCC 43587 / DSM 3638 / JCM 8422 / Vc1).